The primary structure comprises 504 residues: Maturase K (504 aa).

This sequence belongs to the intron maturase 2 family. MatK subfamily.

Its subcellular location is the plastid. It is found in the chloroplast. Usually encoded in the trnK tRNA gene intron. Probably assists in splicing its own and other chloroplast group II introns. The sequence is that of Maturase K from Berzelia lanuginosa (Buttonbush).